Consider the following 455-residue polypeptide: Chromosomal replication initiator protein DnaA 2 (455 aa).

A domain I, interacts with DnaA modulators region spans residues 1 to 95; sequence MLTCNDCSTW…KRSSPLVTPS (95 aa). The tract at residues 96–112 is domain II; that stretch reads IAKPATEVSEENKDFQL. Positions 113–328 are domain III, AAA+ region; that stretch reads KLNGAYRFDN…GAINKLTAYC (216 aa). 4 residues coordinate ATP: Gly157, Gly159, Lys160, and Thr161. The domain IV, binds dsDNA stretch occupies residues 329–455; the sequence is LLFNKPLTET…IAIDSPQHFV (127 aa).

It belongs to the DnaA family. Oligomerizes as a right-handed, spiral filament on DNA at oriC.

Its subcellular location is the cytoplasm. Plays an essential role in the initiation and regulation of chromosomal replication. ATP-DnaA binds to the origin of replication (oriC) to initiate formation of the DNA replication initiation complex once per cell cycle. Binds the DnaA box (a 9 base pair repeat at the origin) and separates the double-stranded (ds)DNA. Forms a right-handed helical filament on oriC DNA; dsDNA binds to the exterior of the filament while single-stranded (ss)DNA is stabiized in the filament's interior. The ATP-DnaA-oriC complex binds and stabilizes one strand of the AT-rich DNA unwinding element (DUE), permitting loading of DNA polymerase. After initiation quickly degrades to an ADP-DnaA complex that is not apt for DNA replication. Binds acidic phospholipids. In Chlamydia trachomatis serovar D (strain ATCC VR-885 / DSM 19411 / UW-3/Cx), this protein is Chromosomal replication initiator protein DnaA 2.